Here is a 210-residue protein sequence, read N- to C-terminus: Acetoin utilization protein AcuA (210 aa).

Residues 19 to 189 (VLIEGPISPE…ANCLMARIGK (171 aa)) form the N-acetyltransferase domain.

It belongs to the acetyltransferase family. As to quaternary structure, monomer.

Its pathway is ketone degradation; acetoin degradation. Functionally, part of the acuABC operon, which is possibly involved in the breakdown of acetoin and butanediol. Acts as an acetyltransferase inactivating acetyl-CoA synthetase AcsA via acetylation at a Lys residue. The protein is Acetoin utilization protein AcuA of Bacillus licheniformis (strain ATCC 14580 / DSM 13 / JCM 2505 / CCUG 7422 / NBRC 12200 / NCIMB 9375 / NCTC 10341 / NRRL NRS-1264 / Gibson 46).